A 496-amino-acid chain; its full sequence is E1B 55 kDa protein (496 aa).

Positions 1–74 (MERRNPSERG…EPESRPGPSG (74 aa)) are disordered. Low complexity predominate over residues 45 to 61 (GGAAAAAGGSQAAAAGA). Phosphoserine occurs at positions 490 and 491. Position 495 is a phosphothreonine (Thr495).

The protein belongs to the adenoviridae E1B 55 kDa protein family. Interacts with host PML-4 and PML-5; this interaction promotes efficient subnuclear targeting of E1B-55K to PML nuclear bodies. Interacts with E4-ORF3 protein. Interacts with E4-ORF6 protein. In terms of processing, phosphorylation at the C-terminus affects the subcellular location.

It localises to the host nucleus. Its subcellular location is the host cytoplasm. Its function is as follows. Plays a major role to prevent cellular inhibition of viral genome replication. Assembles an SCF-like E3 ubiquitin ligase complex based on the cellular proteins ELOB, ELOC, CUL5 and RBX1, in cooperation with viral E4orf6. This viral RING-type ligase ubiquitinates cellular substrates and targets them to proteasomal degradation: TP53/p53, LIG4, MRE11-RAD50-NBS1 (MRN) complex, ITGA3, DAXX and BLM. E1B-55K probably acts as the substrate-specific adapter of the SCF-like E3 ubiquitin ligase complex. Degradation of host TP53/p53 activity is essential for preventing E1A-induced TP53 accumulation that would otherwise lead to cell apoptosis and growth arrest. E1B-55K also inactivates TP53 transcription-factor activity by binding its transactivation domain. E1B-55K also functions as a SUMO1 E3 ligase for TP53 which causes the latter to be sequestered in promyelocytic leukemia (PML) nuclear bodies thereby contributing to maximal inhibition of TP53 function. This chain is E1B 55 kDa protein, found in Homo sapiens (Human).